The sequence spans 353 residues: Phosphate acyltransferase (353 aa).

This sequence belongs to the PlsX family. As to quaternary structure, homodimer. Probably interacts with PlsY.

It is found in the cytoplasm. The catalysed reaction is a fatty acyl-[ACP] + phosphate = an acyl phosphate + holo-[ACP]. The protein operates within lipid metabolism; phospholipid metabolism. Functionally, catalyzes the reversible formation of acyl-phosphate (acyl-PO(4)) from acyl-[acyl-carrier-protein] (acyl-ACP). This enzyme utilizes acyl-ACP as fatty acyl donor, but not acyl-CoA. The protein is Phosphate acyltransferase of Agrobacterium fabrum (strain C58 / ATCC 33970) (Agrobacterium tumefaciens (strain C58)).